The sequence spans 579 residues: ATP-dependent RNA helicase SUV3, mitochondrial (579 aa).

The transit peptide at 1-59 (MAVAAALLRRRALYSALASPSWLHDTSSCYICSISGTHSLVNHPNLRLQRGYHNSGKFD) directs the protein to the mitochondrion. One can recognise a Helicase ATP-binding domain in the interval 72–213 (NAREKKRNVF…QRILEPTGDV (142 aa)). 85-92 (GPTNSGKT) provides a ligand contact to ATP. One can recognise a Helicase C-terminal domain in the interval 214–388 (VTVQYYERLS…GLFPTFDVLS (175 aa)). N-linked (GlcNAc...) asparagine glycosylation is present at asparagine 309.

This sequence belongs to the helicase family. Homodimer; in free form. Component of the mitochondrial degradosome (mtEXO) complex which is a heteropentamer containing 2 copies of SUPV3L1 and 3 copies of PNPT1. Mg(2+) serves as cofactor. Mn(2+) is required as a cofactor.

The protein resides in the nucleus. Its subcellular location is the mitochondrion matrix. The protein localises to the mitochondrion nucleoid. The enzyme catalyses ATP + H2O = ADP + phosphate + H(+). Its function is as follows. Major helicase player in mitochondrial RNA metabolism. Component of the mitochondrial degradosome (mtEXO) complex, that degrades 3' overhang double-stranded RNA with a 3'-to-5' directionality in an ATP-dependent manner. ATPase and ATP-dependent multisubstrate helicase, able to unwind double-stranded (ds) DNA and RNA, and RNA/DNA heteroduplexes in the 5'-to-3' direction. Plays a role in the RNA surveillance system in mitochondria; regulates the stability of mature mRNAs, the removal of aberrantly formed mRNAs and the rapid degradation of non coding processing intermediates. Confers salinity and drought stress tolerances by maintaining both photosynthesis and antioxidant machinery, probably via an increase in plant hormones levels such as gibberellic acid (GA(3)), the cytokinin zeatin (Z) and indole-3-acetic acid (IAA). The protein is ATP-dependent RNA helicase SUV3, mitochondrial of Oryza sativa subsp. japonica (Rice).